Here is a 179-residue protein sequence, read N- to C-terminus: Ribosome-recycling factor (179 aa).

It belongs to the RRF family.

It localises to the cytoplasm. In terms of biological role, responsible for the release of ribosomes from messenger RNA at the termination of protein biosynthesis. May increase the efficiency of translation by recycling ribosomes from one round of translation to another. The chain is Ribosome-recycling factor from Chlamydia trachomatis serovar D (strain ATCC VR-885 / DSM 19411 / UW-3/Cx).